The chain runs to 293 residues: MKVLAIDIGGTKIALGNVVEGHLQHRKQFPTPVVNDATTLAKEILAHCQAWLSDVDVIGISTTGLVSEQGISAINPGTLSFPTPFPLHSELHRLSGKPVKMLNDAQAAAWYEFLQLSPELDVRNMAYITVSTGVGGGLVINQQLHKGKSNFAGHIGHTVLDPNGPLCGCQQRGCVEAIASGNAINAGAQALFGQAISNIELFQLAQHNEQASALIQQSAEAIAQLCLNLKATLDLDLVVIGGGVGLAHGYLARVQAFIDKQPLVFQVKVRAAVGDYDACLLGAAFQFEESNLS.

ATP contacts are provided by residues 5 to 12 (AIDIGGTK) and 133 to 140 (GVGGGLVI). Zn(2+)-binding residues include histidine 157, cysteine 167, cysteine 169, and cysteine 174.

Belongs to the ROK (NagC/XylR) family. NanK subfamily. Homodimer.

The enzyme catalyses an N-acyl-D-mannosamine + ATP = an N-acyl-D-mannosamine 6-phosphate + ADP + H(+). It functions in the pathway amino-sugar metabolism; N-acetylneuraminate degradation; D-fructose 6-phosphate from N-acetylneuraminate: step 2/5. Catalyzes the phosphorylation of N-acetylmannosamine (ManNAc) to ManNAc-6-P. The polypeptide is N-acetylmannosamine kinase (Vibrio vulnificus (strain YJ016)).